The chain runs to 451 residues: UPF0210 protein LMHCC_2097 (451 aa).

This sequence belongs to the UPF0210 family. In terms of assembly, homodimer.

The sequence is that of UPF0210 protein LMHCC_2097 from Listeria monocytogenes serotype 4a (strain HCC23).